The sequence spans 198 residues: ATP synthase subunit delta (198 aa).

This sequence belongs to the ATPase delta chain family. In terms of assembly, F-type ATPases have 2 components, F(1) - the catalytic core - and F(0) - the membrane proton channel. F(1) has five subunits: alpha(3), beta(3), gamma(1), delta(1), epsilon(1). F(0) has three main subunits: a(1), b(2) and c(10-14). The alpha and beta chains form an alternating ring which encloses part of the gamma chain. F(1) is attached to F(0) by a central stalk formed by the gamma and epsilon chains, while a peripheral stalk is formed by the delta and b chains.

It localises to the cell inner membrane. F(1)F(0) ATP synthase produces ATP from ADP in the presence of a proton or sodium gradient. F-type ATPases consist of two structural domains, F(1) containing the extramembraneous catalytic core and F(0) containing the membrane proton channel, linked together by a central stalk and a peripheral stalk. During catalysis, ATP synthesis in the catalytic domain of F(1) is coupled via a rotary mechanism of the central stalk subunits to proton translocation. Its function is as follows. This protein is part of the stalk that links CF(0) to CF(1). It either transmits conformational changes from CF(0) to CF(1) or is implicated in proton conduction. The polypeptide is ATP synthase subunit delta (Gluconacetobacter diazotrophicus (strain ATCC 49037 / DSM 5601 / CCUG 37298 / CIP 103539 / LMG 7603 / PAl5)).